The chain runs to 432 residues: Glutamate-1-semialdehyde 2,1-aminomutase (432 aa).

Lys272 is subject to N6-(pyridoxal phosphate)lysine.

It belongs to the class-III pyridoxal-phosphate-dependent aminotransferase family. HemL subfamily. In terms of assembly, homodimer. Pyridoxal 5'-phosphate is required as a cofactor.

It localises to the cytoplasm. It carries out the reaction (S)-4-amino-5-oxopentanoate = 5-aminolevulinate. Its pathway is porphyrin-containing compound metabolism; protoporphyrin-IX biosynthesis; 5-aminolevulinate from L-glutamyl-tRNA(Glu): step 2/2. It participates in porphyrin-containing compound metabolism; chlorophyll biosynthesis. This is Glutamate-1-semialdehyde 2,1-aminomutase from Acaryochloris marina (strain MBIC 11017).